Here is a 124-residue protein sequence, read N- to C-terminus: Fluoride-specific ion channel FluC (124 aa).

4 helical membrane-spanning segments follow: residues 5-25 (ILAVSAAGIAGTLLRFAAGTW), 38-58 (TLAVNLVGCLIIGLLYGWFLL), 69-89 (GLIVGFVGGLTTFSSFSLDTL), and 97-117 (ALIAFGYLGISVFGGLLATWA). Residues G76 and T79 each coordinate Na(+).

Belongs to the fluoride channel Fluc/FEX (TC 1.A.43) family.

It localises to the cell inner membrane. It catalyses the reaction fluoride(in) = fluoride(out). Na(+) is not transported, but it plays an essential structural role and its presence is essential for fluoride channel function. Its function is as follows. Fluoride-specific ion channel. Important for reducing fluoride concentration in the cell, thus reducing its toxicity. The sequence is that of Fluoride-specific ion channel FluC from Pseudomonas fluorescens (strain SBW25).